We begin with the raw amino-acid sequence, 467 residues long: Probable glutamate decarboxylase gamma (467 aa).

An N6-(pyridoxal phosphate)lysine modification is found at Lys278.

It belongs to the group II decarboxylase family. Pyridoxal 5'-phosphate is required as a cofactor.

It carries out the reaction L-glutamate + H(+) = 4-aminobutanoate + CO2. The sequence is that of Probable glutamate decarboxylase gamma from Listeria innocua serovar 6a (strain ATCC BAA-680 / CLIP 11262).